The following is a 430-amino-acid chain: Enolase (430 aa).

A (2R)-2-phosphoglycerate-binding site is contributed by Gln-165. The Proton donor role is filled by Glu-207. Mg(2+) is bound by residues Asp-244, Glu-287, and Asp-314. Lys-339, Arg-368, Ser-369, and Lys-390 together coordinate (2R)-2-phosphoglycerate. The active-site Proton acceptor is Lys-339.

It belongs to the enolase family. Component of the RNA degradosome, a multiprotein complex involved in RNA processing and mRNA degradation. The cofactor is Mg(2+).

Its subcellular location is the cytoplasm. The protein localises to the secreted. The protein resides in the cell surface. It catalyses the reaction (2R)-2-phosphoglycerate = phosphoenolpyruvate + H2O. It participates in carbohydrate degradation; glycolysis; pyruvate from D-glyceraldehyde 3-phosphate: step 4/5. In terms of biological role, catalyzes the reversible conversion of 2-phosphoglycerate (2-PG) into phosphoenolpyruvate (PEP). It is essential for the degradation of carbohydrates via glycolysis. The chain is Enolase from Xanthomonas axonopodis pv. citri (strain 306).